The sequence spans 62 residues: Metallothionein-4 (62 aa).

Cys6, Cys8, Cys14, Cys16, Cys20, Cys22, Cys25, Cys27, Cys34, Cys35, Cys37, Cys38, Cys42, Cys45, Cys49, Cys51, Cys58, Cys60, and Cys61 together coordinate a divalent metal cation.

It belongs to the metallothionein superfamily. Type 1 family.

Seems to bind zinc and copper. Could play a special role in regulating zinc metabolism during the differentiation of stratified epithelia. This chain is Metallothionein-4 (MT4), found in Homo sapiens (Human).